The sequence spans 434 residues: Enolase (434 aa).

Gln163 is a binding site for (2R)-2-phosphoglycerate. Catalysis depends on Glu205, which acts as the Proton donor. Mg(2+) contacts are provided by Asp242, Glu291, and Asp318. Positions 343, 372, 373, and 394 each coordinate (2R)-2-phosphoglycerate. Lys343 acts as the Proton acceptor in catalysis.

It belongs to the enolase family. Mg(2+) is required as a cofactor.

It is found in the cytoplasm. The protein localises to the secreted. Its subcellular location is the cell surface. It carries out the reaction (2R)-2-phosphoglycerate = phosphoenolpyruvate + H2O. It functions in the pathway carbohydrate degradation; glycolysis; pyruvate from D-glyceraldehyde 3-phosphate: step 4/5. In terms of biological role, catalyzes the reversible conversion of 2-phosphoglycerate (2-PG) into phosphoenolpyruvate (PEP). It is essential for the degradation of carbohydrates via glycolysis. This Streptococcus pneumoniae serotype 19F (strain G54) protein is Enolase.